We begin with the raw amino-acid sequence, 174 residues long: Type II secretion system protein M (174 aa).

Over Met1–Arg32 the chain is Cytoplasmic. Residues Leu33–Trp52 traverse the membrane as a helical segment. Over Arg53–Glu174 the chain is Periplasmic.

Belongs to the GSP M family. As to quaternary structure, type II secretion system is composed of four main components: the outer membrane complex, the inner membrane complex, the cytoplasmic secretion ATPase and the periplasm-spanning pseudopilus. Forms homodimers. Interacts with XcpY/GspL. Interacts with XcpR/GspE and XcpS/GspF.

It localises to the cell inner membrane. In terms of biological role, inner membrane component of the type II secretion system required for the energy-dependent secretion of extracellular factors such as proteases and toxins from the periplasm. Plays a role in the complex assembly and recruits XcpY resulting in a stable complex in the inner membrane. Provides thus a link between the energy-providing XcpR protein in the cytoplasm and the rest of the T2SS machinery. The chain is Type II secretion system protein M (xcpZ) from Pseudomonas aeruginosa (strain ATCC 15692 / DSM 22644 / CIP 104116 / JCM 14847 / LMG 12228 / 1C / PRS 101 / PAO1).